Consider the following 271-residue polypeptide: HTH-type transcriptional repressor AllR (271 aa).

One can recognise an HTH iclR-type domain in the interval 21–83; it reads AQALERGIAI…SQLGWWHIGL (63 aa). A DNA-binding region (H-T-H motif) is located at residues 43–62; sequence VSDISLNLDLPLSTTFRLLK. The 170-residue stretch at 98–267 folds into the IclR-ED domain; sequence VLSVAGPFMR…ARDISTALGL (170 aa). Glyoxylate is bound by residues 154–156, Asp207, Cys217, and 234–236; these read SGA and SIS.

Negative regulator of allantoin and glyoxylate utilization operons. Binds to the gcl promoter and to the allS-allA intergenic region. This Escherichia coli (strain UTI89 / UPEC) protein is HTH-type transcriptional repressor AllR (allR).